We begin with the raw amino-acid sequence, 422 residues long: Enolase (422 aa).

Residue S41 participates in Mg(2+) binding. E163 is a binding site for (2R)-2-phosphoglycerate. The active-site Proton donor is the E204. Mg(2+) contacts are provided by D241, E284, and D311. The active-site Proton acceptor is K336. (2R)-2-phosphoglycerate-binding residues include R365, S366, and K387.

The protein belongs to the enolase family. Homodimer. Component of the RNA degradosome, a multiprotein complex involved in RNA processing and mRNA degradation. Requires Mg(2+) as cofactor.

The protein resides in the cytoplasm. It localises to the secreted. Its subcellular location is the cell surface. The enzyme catalyses (2R)-2-phosphoglycerate = phosphoenolpyruvate + H2O. It participates in carbohydrate degradation; glycolysis; pyruvate from D-glyceraldehyde 3-phosphate: step 4/5. In terms of biological role, catalyzes the reversible conversion of 2-phosphoglycerate (2-PG) into phosphoenolpyruvate (PEP). It is essential for the degradation of carbohydrates via glycolysis. The sequence is that of Enolase from Legionella pneumophila subsp. pneumophila (strain Philadelphia 1 / ATCC 33152 / DSM 7513).